The sequence spans 58 residues: UPF0337 protein SAV_738 (58 aa).

Positions 1–58 (MAADEKAQANGEQAKGKVKKVVGGAAGNESLKGKGHAEESKGDLRAAKEKAKDAIKRK) are disordered. Basic and acidic residues predominate over residues 31–58 (LKGKGHAEESKGDLRAAKEKAKDAIKRK).

It belongs to the UPF0337 (CsbD) family.

The polypeptide is UPF0337 protein SAV_738 (Streptomyces avermitilis (strain ATCC 31267 / DSM 46492 / JCM 5070 / NBRC 14893 / NCIMB 12804 / NRRL 8165 / MA-4680)).